Here is a 127-residue protein sequence, read N- to C-terminus: S-adenosylmethionine decarboxylase proenzyme 2 (127 aa).

The active-site Schiff-base intermediate with substrate; via pyruvic acid is Ser-63. Ser-63 is modified (pyruvic acid (Ser); by autocatalysis). Residue His-68 is the Proton acceptor; for processing activity of the active site. Cys-83 functions as the Proton donor; for catalytic activity in the catalytic mechanism.

The protein belongs to the prokaryotic AdoMetDC family. Type 1 subfamily. As to quaternary structure, heterotetramer of two alpha and two beta chains arranged as a dimer of alpha/beta heterodimers. Pyruvate is required as a cofactor. Is synthesized initially as an inactive proenzyme. Formation of the active enzyme involves a self-maturation process in which the active site pyruvoyl group is generated from an internal serine residue via an autocatalytic post-translational modification. Two non-identical subunits are generated from the proenzyme in this reaction, and the pyruvate is formed at the N-terminus of the alpha chain, which is derived from the carboxyl end of the proenzyme. The post-translation cleavage follows an unusual pathway, termed non-hydrolytic serinolysis, in which the side chain hydroxyl group of the serine supplies its oxygen atom to form the C-terminus of the beta chain, while the remainder of the serine residue undergoes an oxidative deamination to produce ammonia and the pyruvoyl group blocking the N-terminus of the alpha chain.

It catalyses the reaction S-adenosyl-L-methionine + H(+) = S-adenosyl 3-(methylsulfanyl)propylamine + CO2. It functions in the pathway amine and polyamine biosynthesis; S-adenosylmethioninamine biosynthesis; S-adenosylmethioninamine from S-adenosyl-L-methionine: step 1/1. Its function is as follows. Catalyzes the decarboxylation of S-adenosylmethionine to S-adenosylmethioninamine (dcAdoMet), the propylamine donor required for the synthesis of the polyamines spermine and spermidine from the diamine putrescine. In Halalkalibacterium halodurans (strain ATCC BAA-125 / DSM 18197 / FERM 7344 / JCM 9153 / C-125) (Bacillus halodurans), this protein is S-adenosylmethionine decarboxylase proenzyme 2.